Consider the following 340-residue polypeptide: Adenosine kinase (340 aa).

Asp292 is a catalytic residue.

It belongs to the carbohydrate kinase PfkB family. The cofactor is Mg(2+).

The enzyme catalyses adenosine + ATP = AMP + ADP + H(+). Its pathway is purine metabolism; AMP biosynthesis via salvage pathway; AMP from adenosine: step 1/1. In Schizosaccharomyces pombe (strain 972 / ATCC 24843) (Fission yeast), this protein is Adenosine kinase (ado1).